Consider the following 243-residue polypeptide: 4-hydroxy-tetrahydrodipicolinate reductase (243 aa).

NAD(+)-binding positions include 9 to 14, 78 to 80, and 104 to 107; these read GANGKM, GTS, and APNF. The Proton donor/acceptor role is filled by His-134. A (S)-2,3,4,5-tetrahydrodipicolinate-binding site is contributed by His-135. The Proton donor role is filled by Lys-138. A (S)-2,3,4,5-tetrahydrodipicolinate-binding site is contributed by 144–145; that stretch reads GT.

It belongs to the DapB family.

Its subcellular location is the cytoplasm. The catalysed reaction is (S)-2,3,4,5-tetrahydrodipicolinate + NAD(+) + H2O = (2S,4S)-4-hydroxy-2,3,4,5-tetrahydrodipicolinate + NADH + H(+). It carries out the reaction (S)-2,3,4,5-tetrahydrodipicolinate + NADP(+) + H2O = (2S,4S)-4-hydroxy-2,3,4,5-tetrahydrodipicolinate + NADPH + H(+). The protein operates within amino-acid biosynthesis; L-lysine biosynthesis via DAP pathway; (S)-tetrahydrodipicolinate from L-aspartate: step 4/4. In terms of biological role, catalyzes the conversion of 4-hydroxy-tetrahydrodipicolinate (HTPA) to tetrahydrodipicolinate. The chain is 4-hydroxy-tetrahydrodipicolinate reductase from Legionella pneumophila (strain Lens).